Reading from the N-terminus, the 276-residue chain is uncharacterized protein (276 aa).

The N-terminal stretch at 1–16 (MELGLILMFASAFVSA) is a signal peptide. Asn265 carries an N-linked (GlcNAc...) asparagine glycan.

This is an uncharacterized protein from Encephalitozoon cuniculi (strain GB-M1) (Microsporidian parasite).